Here is a 154-residue protein sequence, read N- to C-terminus: UPF0178 protein ABC1688 (154 aa).

The protein belongs to the UPF0178 family.

This is UPF0178 protein ABC1688 from Shouchella clausii (strain KSM-K16) (Alkalihalobacillus clausii).